The primary structure comprises 644 residues: DNA gyrase subunit B (644 aa).

Positions 429 to 543 (CEIFLVEGDS…AGYVYIAQPP (115 aa)) constitute a Toprim domain. Mg(2+)-binding residues include glutamate 435, aspartate 508, and aspartate 510.

The protein belongs to the type II topoisomerase GyrB family. As to quaternary structure, heterotetramer, composed of two GyrA and two GyrB chains. In the heterotetramer, GyrA contains the active site tyrosine that forms a transient covalent intermediate with DNA, while GyrB binds cofactors and catalyzes ATP hydrolysis. Requires Mg(2+) as cofactor. Mn(2+) is required as a cofactor. It depends on Ca(2+) as a cofactor.

It localises to the cytoplasm. It catalyses the reaction ATP-dependent breakage, passage and rejoining of double-stranded DNA.. Its function is as follows. A type II topoisomerase that negatively supercoils closed circular double-stranded (ds) DNA in an ATP-dependent manner to modulate DNA topology and maintain chromosomes in an underwound state. Negative supercoiling favors strand separation, and DNA replication, transcription, recombination and repair, all of which involve strand separation. Also able to catalyze the interconversion of other topological isomers of dsDNA rings, including catenanes and knotted rings. Type II topoisomerases break and join 2 DNA strands simultaneously in an ATP-dependent manner. The polypeptide is DNA gyrase subunit B (Staphylococcus aureus (strain Mu50 / ATCC 700699)).